Here is a 248-residue protein sequence, read N- to C-terminus: Mannose-binding protein C (248 aa).

The first 20 residues, 1–20 (MSLIPSLSLLLMSMVAASYS), serve as a signal peptide directing secretion. The Collagen-like domain occupies 42–99 (GINGFPGKDGRDGTKGEKGEPGQGLRGLQGPPGKLGPPGNPGPSGSPGPKGQKGDPGN). The tract at residues 43–110 (INGFPGKDGR…PDCDSSLAVS (68 aa)) is disordered. Pro-47 is subject to 4-hydroxyproline. Positions 49 to 61 (KDGRDGTKGEKGE) are enriched in basic and acidic residues. Pro-73, Pro-79, Pro-82, and Pro-88 each carry 4-hydroxyproline. Over residues 75–87 (KLGPPGNPGPSGS) the composition is skewed to pro residues. Positions 112–130 (RKALQTEMARIKKWLTFSL) form a coiled coil. The C-type lectin domain maps to 134 to 245 (VGNKFFLTNG…CSSSHLAVCE (112 aa)). Cystine bridges form between Cys-155–Cys-244 and Cys-222–Cys-236.

Oligomeric complex of 3 or more homotrimers. Interacts with MASP1 and MASP2. Interacts with MEP1A and MEP1B and may inhibit their catalytic activity. Hydroxylation on proline residues within the sequence motif, GXPG, is most likely to be 4-hydroxy as this fits the requirement for 4-hydroxylation in vertebrates.

The protein resides in the secreted. In terms of biological role, calcium-dependent lectin involved in innate immune defense. Binds mannose, fucose and N-acetylglucosamine on different microorganisms and activates the lectin complement pathway. Binds to late apoptotic cells, as well as to apoptotic blebs and to necrotic cells, but not to early apoptotic cells, facilitating their uptake by macrophages. The chain is Mannose-binding protein C (MBL2) from Nomascus concolor (Black crested gibbon).